Here is a 138-residue protein sequence, read N- to C-terminus: Large ribosomal subunit protein uL16c (138 aa).

The protein belongs to the universal ribosomal protein uL16 family. As to quaternary structure, part of the 50S ribosomal subunit.

Its subcellular location is the plastid. The protein resides in the chloroplast. The sequence is that of Large ribosomal subunit protein uL16c from Tetradesmus obliquus (Green alga).